The primary structure comprises 255 residues: Aliphatic sulfonates import ATP-binding protein SsuB (255 aa).

One can recognise an ABC transporter domain in the interval 7–231; that stretch reads IKEKAFVQEG…PRNRTTPDFQ (225 aa). 39–46 is an ATP binding site; sequence GPSGCGKS.

Belongs to the ABC transporter superfamily. Aliphatic sulfonates importer (TC 3.A.1.17.2) family. As to quaternary structure, the complex is composed of two ATP-binding proteins (SsuB), two transmembrane proteins (SsuC) and a solute-binding protein (SsuA).

It is found in the cell membrane. The enzyme catalyses ATP + H2O + aliphatic sulfonate-[sulfonate-binding protein]Side 1 = ADP + phosphate + aliphatic sulfonateSide 2 + [sulfonate-binding protein]Side 1.. Functionally, part of the ABC transporter complex SsuABC involved in aliphatic sulfonates import. Responsible for energy coupling to the transport system. Is also involved in taurine transport. The chain is Aliphatic sulfonates import ATP-binding protein SsuB from Bacillus subtilis (strain 168).